A 27-amino-acid polypeptide reads, in one-letter code: C-reactive protein P1 (27 aa).

Positions 1 to 27 (IPQDLSGKMLTFPKEEDDDDVKLMTPK) are disordered. The Pentraxin (PTX) domain maps to 6–27 (SGKMLTFPKEEDDDDVKLMTPK).

The protein belongs to the pentraxin family. Homopentamer. Pentraxin (or pentaxin) have a discoid arrangement of 5 non-covalently bound subunits. Exists as a dimer under reducing conditions. It depends on Ca(2+) as a cofactor. Post-translationally, glycosylated.

It localises to the secreted. Displays several functions associated with host defense: it promotes agglutination, bacterial capsular swelling, phagocytosis, and complement fixation through its calcium-dependent binding to phosphorylcholine. In Gadus morhua (Atlantic cod), this protein is C-reactive protein P1.